Consider the following 131-residue polypeptide: MQLMDPEKMKKLLEKAKEKGWIADQNVEIKFVILDLKPKWMKCRRTKRLVFQFHMLGDAENKTLCGKTLEEYQILPERQENLVVTQVNMMLGGLGVLVFFDLCPECFGNVNRCEPLKEGEKEKLKEEGLTS.

This is an uncharacterized protein from Aquifex aeolicus (strain VF5).